We begin with the raw amino-acid sequence, 124 residues long: Small ribosomal subunit protein uS13 (124 aa).

The segment at 94-124 (GLPLRGQRTKNNSRTRKGKRKTVANKKKATK) is disordered. A compositionally biased stretch (basic residues) spans 100–124 (QRTKNNSRTRKGKRKTVANKKKATK).

The protein belongs to the universal ribosomal protein uS13 family. Part of the 30S ribosomal subunit. Forms a loose heterodimer with protein S19. Forms two bridges to the 50S subunit in the 70S ribosome.

Its function is as follows. Located at the top of the head of the 30S subunit, it contacts several helices of the 16S rRNA. In the 70S ribosome it contacts the 23S rRNA (bridge B1a) and protein L5 of the 50S subunit (bridge B1b), connecting the 2 subunits; these bridges are implicated in subunit movement. Contacts the tRNAs in the A and P-sites. The sequence is that of Small ribosomal subunit protein uS13 from Flavobacterium psychrophilum (strain ATCC 49511 / DSM 21280 / CIP 103535 / JIP02/86).